An 855-amino-acid chain; its full sequence is DNA mismatch repair protein MutS (855 aa).

616-623 (GPNMGGKS) provides a ligand contact to ATP.

The protein belongs to the DNA mismatch repair MutS family.

This protein is involved in the repair of mismatches in DNA. It is possible that it carries out the mismatch recognition step. This protein has a weak ATPase activity. This Salmonella paratyphi C (strain RKS4594) protein is DNA mismatch repair protein MutS.